Here is a 427-residue protein sequence, read N- to C-terminus: Tyrosine--tRNA ligase (427 aa).

Tyr-39 contacts L-tyrosine. The 'HIGH' region motif lies at 44 to 53; sequence PTSDSLHIGH. L-tyrosine-binding residues include Tyr-178 and Gln-182. The short motif at 238-242 is the 'KMSKS' region element; that stretch reads KFGKT. Lys-241 contacts ATP. Positions 360–417 constitute an S4 RNA-binding domain; that stretch reads ITLQQALVESKLVVSRAQARELISSNSITVNSKKQLKTEYIFCATDRLYNRFTLLRRG.

This sequence belongs to the class-I aminoacyl-tRNA synthetase family. TyrS type 1 subfamily. As to quaternary structure, homodimer.

The protein localises to the cytoplasm. It catalyses the reaction tRNA(Tyr) + L-tyrosine + ATP = L-tyrosyl-tRNA(Tyr) + AMP + diphosphate + H(+). In terms of biological role, catalyzes the attachment of tyrosine to tRNA(Tyr) in a two-step reaction: tyrosine is first activated by ATP to form Tyr-AMP and then transferred to the acceptor end of tRNA(Tyr). This Blochmanniella pennsylvanica (strain BPEN) protein is Tyrosine--tRNA ligase.